The chain runs to 480 residues: Sensor histidine kinase CusS (480 aa).

The Cytoplasmic portion of the chain corresponds to 1–15 (MVSKPFQRPFSLATR). The chain crosses the membrane as a helical span at residues 16–36 (LTFFISLATIAAFFAFAWIMI). Over 37–186 (HSVKVHFAEQ…LHYINDLMNK (150 aa)) the chain is Periplasmic. Residues 187-207 (LIMTASVISILIVFIVLLAVH) form a helical membrane-spanning segment. In terms of domain architecture, HAMP spans 208–260 (KGHAPIRSVSRQIQNITSKDLDVRLDPQTVPIELEQLVLSFNHMIERIEDVFT). Topologically, residues 208-480 (KGHAPIRSVS…GTRFVITLPA (273 aa)) are cytoplasmic. The Histidine kinase domain occupies 268-480 (DIAHEIRTPI…GTRFVITLPA (213 aa)). His-271 carries the phosphohistidine; by autocatalysis modification.

Post-translationally, autophosphorylated.

The protein resides in the cell inner membrane. It catalyses the reaction ATP + protein L-histidine = ADP + protein N-phospho-L-histidine.. In terms of biological role, member of the two-component regulatory system CusS/CusR involved in response to copper and silver. Acts as a copper/silver ion sensor. Activates CusR by phosphorylation. The sequence is that of Sensor histidine kinase CusS (cusS) from Escherichia coli (strain K12).